A 452-amino-acid chain; its full sequence is Acetyl-CoA decarbonylase/synthase complex subunit delta (452 aa).

The protein belongs to the CdhD family. Heterodimer of delta and gamma chains. The ACDS complex is made up of alpha, epsilon, beta, gamma and delta chains with a probable stoichiometry of (alpha(2)epsilon(2))(4)-beta(8)-(gamma(1)delta(1))(8).

Functionally, part of a complex that catalyzes the reversible cleavage of acetyl-CoA, allowing autotrophic growth from CO(2). Probably maintains the overall quaternary structure of the ACDS complex. The protein is Acetyl-CoA decarbonylase/synthase complex subunit delta of Archaeoglobus fulgidus (strain ATCC 49558 / DSM 4304 / JCM 9628 / NBRC 100126 / VC-16).